Consider the following 816-residue polypeptide: Acyl-homoserine lactone acylase QuiP (816 aa).

Positions 1 to 33 are cleaved as a signal peptide; it reads MASPALSHFLPRFGVAAAVAGVLSLTGCQTWNA. Ser-262 (nucleophile) is an active-site residue.

The protein belongs to the peptidase S45 family. In terms of assembly, heterodimer of an alpha subunit and a beta subunit processed from the same precursor.

The protein resides in the periplasm. The catalysed reaction is an N-acyl-L-homoserine lactone + H2O = L-homoserine lactone + a carboxylate. In terms of biological role, catalyzes the deacylation of acyl-homoserine lactone (AHL or acyl-HSL), releasing homoserine lactone (HSL) and the corresponding fatty acid. Possesses a specificity for the degradation of long-chain acyl-HSLs (side chains of seven or more carbons in length). This chain is Acyl-homoserine lactone acylase QuiP (quiP), found in Pseudomonas fluorescens (strain Pf0-1).